The chain runs to 368 residues: Glutamine synthetase root isozyme 2 (368 aa).

The GS beta-grasp domain maps to 19–99; sequence IIAEYIWVGG…VMCDCYEPNG (81 aa). The disordered stretch occupies residues 38 to 66; the sequence is RTLSGPVDDPSKLPKWNFDGSSTGQAPGD. Positions 106 to 368 constitute a GS catalytic domain; the sequence is KRHGAAKIFS…NGDGKGAAAP (263 aa).

The protein belongs to the glutamine synthetase family. As to quaternary structure, homooctamer. As to expression, found mainly in the vascular tissues of seedling roots.

Its subcellular location is the cytoplasm. It catalyses the reaction L-glutamate + NH4(+) + ATP = L-glutamine + ADP + phosphate + H(+). Plays a role in the flow of nitrogen into nitrogenous organic compounds. The sequence is that of Glutamine synthetase root isozyme 2 (GLN2) from Zea mays (Maize).